The primary structure comprises 505 residues: 4-alpha-glucanotransferase (505 aa).

Belongs to the disproportionating enzyme family.

The protein localises to the cytoplasm. It carries out the reaction Transfers a segment of a (1-&gt;4)-alpha-D-glucan to a new position in an acceptor, which may be glucose or a (1-&gt;4)-alpha-D-glucan.. The sequence is that of 4-alpha-glucanotransferase (malQ) from Streptococcus pneumoniae serotype 4 (strain ATCC BAA-334 / TIGR4).